The following is a 466-amino-acid chain: Glutamyl-tRNA reductase (466 aa).

Residues 47–50 (TCNR), S107, 112–114 (EQQ), and Q118 contribute to the substrate site. C48 (nucleophile) is an active-site residue. 194 to 199 (GAGAMS) lines the NADP(+) pocket.

This sequence belongs to the glutamyl-tRNA reductase family. Homodimer.

The catalysed reaction is (S)-4-amino-5-oxopentanoate + tRNA(Glu) + NADP(+) = L-glutamyl-tRNA(Glu) + NADPH + H(+). It participates in porphyrin-containing compound metabolism; protoporphyrin-IX biosynthesis; 5-aminolevulinate from L-glutamyl-tRNA(Glu): step 1/2. Catalyzes the NADPH-dependent reduction of glutamyl-tRNA(Glu) to glutamate 1-semialdehyde (GSA). The polypeptide is Glutamyl-tRNA reductase (Corynebacterium efficiens (strain DSM 44549 / YS-314 / AJ 12310 / JCM 11189 / NBRC 100395)).